An 834-amino-acid chain; its full sequence is Phenylalanine--tRNA ligase beta subunit (834 aa).

One can recognise a tRNA-binding domain in the interval 48–159 (GDIERPLVVG…GTAEPGTDAN (112 aa)). The region spanning 411-492 (PAPEPIRMDI…RLEGLEQIPS (82 aa)) is the B5 domain. 4 residues coordinate Mg(2+): D470, D476, E479, and E480. The 94-residue stretch at 740–833 (SPFPAVLQDV…AADAVGAVLR (94 aa)) folds into the FDX-ACB domain.

This sequence belongs to the phenylalanyl-tRNA synthetase beta subunit family. Type 1 subfamily. In terms of assembly, tetramer of two alpha and two beta subunits. Requires Mg(2+) as cofactor.

The protein localises to the cytoplasm. It carries out the reaction tRNA(Phe) + L-phenylalanine + ATP = L-phenylalanyl-tRNA(Phe) + AMP + diphosphate + H(+). The protein is Phenylalanine--tRNA ligase beta subunit of Nocardia farcinica (strain IFM 10152).